We begin with the raw amino-acid sequence, 285 residues long: NADH-dependent oxidoreductase ucdB (285 aa).

Thr87 lines the NAD(+) pocket. Lys156 is a catalytic residue.

The protein belongs to the HIBADH-related family. NP60 subfamily.

Its pathway is secondary metabolite biosynthesis. Functionally, nonribosomal peptide synthetase that mediates the biosynthesis of usterphenyllins and uscandidusins, p-terphenyl derivatives. Within the pathway, ucdB alone catalyzes both reduction and dehydration of atromentin to form a terphenyl triol intermediate. The pathway begin with the biosynthesis of 4-hydroxyphenylpyruvate (HPPA) from L-tyrosine, possibly by the aminotransferase ucdG. The nonribosomal peptide synthetase ucdA then condenses two HPPA units to produce atromentin. The key step in this pathway is the reduction and dehydration of atromentin to form a terphenyl triol intermediate, performed by the NAD-dependent dehydrogenase ucdB. Further O-methylation by the methyltransferase ucdC forms terphenyllin carrying two methoxy moieties at C-9 and C-12, and subsequent dihydroxylation at C-3 of ring A and C-15 of ring C by the flavin-dependent oxygenase ucdD leads to 3,15-dihydroxyterphenyllin. Prenylation by ucdE at position C-5 of ring A forms usterphenyllin B, and is followed by a second prenylation at position C-14 of ring C to form usterphenyllin A. The following furan ring formation that leads to uscandidusins A and B was proven to be an unexpected spontaneous non-enzymatic reaction. The protein is NADH-dependent oxidoreductase ucdB of Aspergillus ustus.